Consider the following 188-residue polypeptide: Ribose 1,5-bisphosphate phosphokinase PhnN (188 aa).

Residue 9-16 coordinates ATP; that stretch reads GPSGAGKD.

Belongs to the ribose 1,5-bisphosphokinase family.

The catalysed reaction is alpha-D-ribose 1,5-bisphosphate + ATP = 5-phospho-alpha-D-ribose 1-diphosphate + ADP. It functions in the pathway metabolic intermediate biosynthesis; 5-phospho-alpha-D-ribose 1-diphosphate biosynthesis; 5-phospho-alpha-D-ribose 1-diphosphate from D-ribose 5-phosphate (route II): step 3/3. In terms of biological role, catalyzes the phosphorylation of ribose 1,5-bisphosphate to 5-phospho-D-ribosyl alpha-1-diphosphate (PRPP). The protein is Ribose 1,5-bisphosphate phosphokinase PhnN of Pectobacterium parmentieri (strain WPP163) (Pectobacterium wasabiae (strain WPP163)).